Reading from the N-terminus, the 429-residue chain is 3-phosphoshikimate 1-carboxyvinyltransferase (429 aa).

Residues Lys-23, Ser-24, and Arg-28 each contribute to the 3-phosphoshikimate site. Residue Lys-23 coordinates phosphoenolpyruvate. Positions 95 and 123 each coordinate phosphoenolpyruvate. The 3-phosphoshikimate site is built by Ser-168, Gln-170, Asp-316, and Lys-343. A phosphoenolpyruvate-binding site is contributed by Gln-170. The active-site Proton acceptor is the Asp-316. 2 residues coordinate phosphoenolpyruvate: Arg-347 and Arg-389.

Belongs to the EPSP synthase family. Monomer.

The protein localises to the cytoplasm. The catalysed reaction is 3-phosphoshikimate + phosphoenolpyruvate = 5-O-(1-carboxyvinyl)-3-phosphoshikimate + phosphate. It participates in metabolic intermediate biosynthesis; chorismate biosynthesis; chorismate from D-erythrose 4-phosphate and phosphoenolpyruvate: step 6/7. Catalyzes the transfer of the enolpyruvyl moiety of phosphoenolpyruvate (PEP) to the 5-hydroxyl of shikimate-3-phosphate (S3P) to produce enolpyruvyl shikimate-3-phosphate and inorganic phosphate. The chain is 3-phosphoshikimate 1-carboxyvinyltransferase from Bacillus cereus (strain ATCC 10987 / NRS 248).